Here is a 208-residue protein sequence, read N- to C-terminus: Uracil phosphoribosyltransferase (208 aa).

Residues Arg-78, Arg-103, and 130–138 (DPMLATGGS) contribute to the 5-phospho-alpha-D-ribose 1-diphosphate site. Uracil is bound by residues Ile-193 and 198-200 (GDA). Asp-199 lines the 5-phospho-alpha-D-ribose 1-diphosphate pocket.

Belongs to the UPRTase family. Mg(2+) serves as cofactor.

The enzyme catalyses UMP + diphosphate = 5-phospho-alpha-D-ribose 1-diphosphate + uracil. Its pathway is pyrimidine metabolism; UMP biosynthesis via salvage pathway; UMP from uracil: step 1/1. Allosterically activated by GTP. In terms of biological role, catalyzes the conversion of uracil and 5-phospho-alpha-D-ribose 1-diphosphate (PRPP) to UMP and diphosphate. The chain is Uracil phosphoribosyltransferase from Aliivibrio fischeri (strain MJ11) (Vibrio fischeri).